We begin with the raw amino-acid sequence, 118 residues long: Large ribosomal subunit protein bL21c (118 aa).

This sequence belongs to the bacterial ribosomal protein bL21 family. As to quaternary structure, part of the 50S ribosomal subunit.

Its subcellular location is the plastid. The protein localises to the chloroplast. In terms of biological role, this protein binds to 23S rRNA. This Zygnema circumcarinatum (Green alga) protein is Large ribosomal subunit protein bL21c.